The primary structure comprises 53 residues: Reg12l (53 aa).

The propeptide occupies 1-34 (RVLFRSGDQPADQPAERMQDISPEQNPLFHPDKR). Intrachain disulfides connect cysteine 36-cysteine 50, cysteine 37-cysteine 48, and cysteine 42-cysteine 51.

This sequence belongs to the conotoxin M superfamily. Expressed by the venom duct.

It localises to the secreted. The polypeptide is Reg12l (Conus regius (Crown cone)).